The following is a 90-amino-acid chain: YcgL domain-containing protein YE2368 (90 aa).

The region spanning 1-85 (MLCAIYRSPK…PPESLLKMHL (85 aa)) is the YcgL domain.

This chain is YcgL domain-containing protein YE2368, found in Yersinia enterocolitica serotype O:8 / biotype 1B (strain NCTC 13174 / 8081).